Consider the following 463-residue polypeptide: Cytochrome P450 4d8 (463 aa).

Heme contacts are provided by Glu267 and Cys409.

Belongs to the cytochrome P450 family. The cofactor is heme.

The protein resides in the endoplasmic reticulum membrane. It is found in the microsome membrane. Functionally, may be involved in the metabolism of insect hormones and in the breakdown of synthetic insecticides. The chain is Cytochrome P450 4d8 (Cyp4d8) from Drosophila melanogaster (Fruit fly).